The chain runs to 104 residues: Gastrin (104 aa).

A signal peptide spans 1-21 (MQRLCAHALILVLALAAFCEA). Positions 22–58 (SWKPHSQLQDAPVAPGANKGQEPLRMDRLGPASHPRR) are excised as a propeptide. Residues 26-70 (HSQLQDAPVAPGANKGQEPLRMDRLGPASHPRRQLGLQDPPHMVA) form a disordered region. At Tyr-87 the chain carries Sulfotyrosine. Phe-92 is subject to Phenylalanine amide. Ser-96 carries the phosphoserine modification. The propeptide occupies 96–104 (SAEEGDQHP).

The protein belongs to the gastrin/cholecystokinin family. Post-translationally, sulfation enhances proteolytic processing, and blocks peptide degradation. Levels of sulfation differ between proteolytically-cleaved gastrins and between tissues.

The protein resides in the secreted. Its function is as follows. Gastrin stimulates the stomach mucosa to produce and secrete hydrochloric acid and the pancreas to secrete its digestive enzymes. It also stimulates smooth muscle contraction and increases blood circulation and water secretion in the stomach and intestine. This chain is Gastrin (GAST), found in Ovis aries (Sheep).